The following is a 914-amino-acid chain: Beta-mannosidase A (914 aa).

The N-terminal stretch at 1–20 (MRFTATAAALVASSIPATLG) is a signal peptide. 7 N-linked (GlcNAc...) asparagine glycosylation sites follow: Asn39, Asn79, Asn230, Asn265, Asn299, Asn309, and Asn330. The active-site Proton donor is Glu462. N-linked (GlcNAc...) asparagine glycans are attached at residues Asn591, Asn614, Asn641, Asn721, Asn744, Asn773, Asn784, and Asn909.

The protein belongs to the glycosyl hydrolase 2 family. Beta-mannosidase A subfamily. As to quaternary structure, homodimer.

It is found in the secreted. It catalyses the reaction Hydrolysis of terminal, non-reducing beta-D-mannose residues in beta-D-mannosides.. The protein operates within glycan metabolism; N-glycan degradation. In terms of biological role, exoglycosidase that cleaves the single beta-linked mannose residue from the non-reducing end of beta-mannosidic oligosaccharides of various complexity and length. Involved in the degradation of polymeric mannan and galactomannan. The sequence is that of Beta-mannosidase A (mndA) from Aspergillus oryzae (strain ATCC 42149 / RIB 40) (Yellow koji mold).